The following is a 60-amino-acid chain: Cytotoxin 7 (60 aa).

4 cysteine pairs are disulfide-bonded: cysteine 3-cysteine 21, cysteine 14-cysteine 38, cysteine 42-cysteine 53, and cysteine 54-cysteine 59.

The protein belongs to the three-finger toxin family. Short-chain subfamily. Type IA cytotoxin sub-subfamily. As to quaternary structure, monomer in solution; Homodimer and oligomer in the presence of negatively charged lipids forming a pore with a size ranging between 20 and 30 Angstroms. In terms of tissue distribution, expressed by the venom gland.

The protein localises to the secreted. Its subcellular location is the target cell membrane. Shows cytolytic activity on many different cells by forming pore in lipid membranes. In vivo, increases heart rate or kills the animal by cardiac arrest. In addition, it binds to heparin with high affinity, interacts with Kv channel-interacting protein 1 (KCNIP1) in a calcium-independent manner, and binds to integrin alpha-V/beta-3 (ITGAV/ITGB3) with moderate affinity. Preferentially binds acidic phospholipids like phosphatidylserine, phosphatidic acid and phosphatidyl glycerol. Has hemolytic activity towards human erythrocytes (EC(50)=0.171 uM) and cytolytic activity towards various cell lines. The polypeptide is Cytotoxin 7 (Naja naja (Indian cobra)).